Consider the following 252-residue polypeptide: 5'-nucleotidase SurE (252 aa).

Asp8, Asp9, Ser40, and Asn93 together coordinate a divalent metal cation.

It belongs to the SurE nucleotidase family. Requires a divalent metal cation as cofactor.

The protein localises to the cytoplasm. It carries out the reaction a ribonucleoside 5'-phosphate + H2O = a ribonucleoside + phosphate. In terms of biological role, nucleotidase that shows phosphatase activity on nucleoside 5'-monophosphates. This Erythrobacter litoralis (strain HTCC2594) protein is 5'-nucleotidase SurE.